Here is a 157-residue protein sequence, read N- to C-terminus: MSSVVETVTDLVTPILQDHDFYLYDLEFVKEGKSWYLRVYINKDGGITLEDCALVSDELSEALDNVEPDPIPQAYFLEVSSPGAERPLKKEEDYQRAIDHYIHISLYQQINGQKVYEGTLTQLSDKEITLDYLDKTRHRQITIDRQKIAQARLAIKF.

Belongs to the RimP family.

The protein resides in the cytoplasm. Functionally, required for maturation of 30S ribosomal subunits. This chain is Ribosome maturation factor RimP, found in Limosilactobacillus reuteri (strain DSM 20016) (Lactobacillus reuteri).